Reading from the N-terminus, the 1180-residue chain is RecBCD enzyme subunit RecB (1180 aa).

Residues 1–852 (MITTIPKSIN…QSGKNHISTK (852 aa)) form a DNA-binding and helicase activity, interacts with RecC region. One can recognise a UvrD-like helicase ATP-binding domain in the interval 3-448 (TTIPKSINVT…YFLDTNWRSS (446 aa)). An ATP-binding site is contributed by 24-31 (ASAGTGKT). Residues 478–745 (SSRINKTTKF…KIVSIHKSKG (268 aa)) enclose the UvrD-like helicase C-terminal domain. The nuclease activity, interacts with RecD and RecA stretch occupies residues 905–1180 (NYNFTSYSQL…EIIKKLEQIF (276 aa)). Residues His964, Asp1075, and Asp1088 each contribute to the Mg(2+) site. Asp1088 (for nuclease activity) is an active-site residue.

The protein belongs to the helicase family. UvrD subfamily. Heterotrimer of RecB, RecC and RecD. All subunits contribute to DNA-binding. Interacts with RecA. It depends on Mg(2+) as a cofactor.

It carries out the reaction Exonucleolytic cleavage (in the presence of ATP) in either 5'- to 3'- or 3'- to 5'-direction to yield 5'-phosphooligonucleotides.. The catalysed reaction is Couples ATP hydrolysis with the unwinding of duplex DNA by translocating in the 3'-5' direction.. It catalyses the reaction ATP + H2O = ADP + phosphate + H(+). In terms of biological role, a helicase/nuclease that prepares dsDNA breaks (DSB) for recombinational DNA repair. Binds to DSBs and unwinds DNA via a highly rapid and processive ATP-dependent bidirectional helicase activity. Unwinds dsDNA until it encounters a Chi (crossover hotspot instigator) sequence from the 3' direction. Cuts ssDNA a few nucleotides 3' to the Chi site. The properties and activities of the enzyme are changed at Chi. The Chi-altered holoenzyme produces a long 3'-ssDNA overhang and facilitates RecA-binding to the ssDNA for homologous DNA recombination and repair. Holoenzyme degrades any linearized DNA that is unable to undergo homologous recombination. In the holoenzyme this subunit contributes ATPase, 3'-5' helicase, exonuclease activity and loads RecA onto ssDNA. In Buchnera aphidicola subsp. Baizongia pistaciae (strain Bp), this protein is RecBCD enzyme subunit RecB.